A 163-amino-acid polypeptide reads, in one-letter code: CASP-like protein 1C2 (163 aa).

The Cytoplasmic portion of the chain corresponds to 1-7 (MAKLHRL). Residues 8 to 28 (ISAVLRLAAAGAAAAAAVIMV) form a helical membrane-spanning segment. The Extracellular portion of the chain corresponds to 29 to 50 (TSHETTSLFGIEMEAKYSYTPS). The helical transmembrane segment at 51 to 71 (FVFFVVAFAVTFAYSLLAAVL) threads the bilayer. The Cytoplasmic segment spans residues 72–80 (VRPGTTASR). The chain crosses the membrane as a helical span at residues 81-101 (LVLLSDVTVGMLLTGAVAATG). The Extracellular portion of the chain corresponds to 102–129 (AISQVGKSGNEHAGWLPICAQVQAYCGH). A helical transmembrane segment spans residues 130–150 (VMGALIAGFVSLLLYFLIIMY). The Cytoplasmic segment spans residues 151–163 (SLHAVAEPLCSCH).

The protein belongs to the Casparian strip membrane proteins (CASP) family. In terms of assembly, homodimer and heterodimers.

The protein localises to the cell membrane. This Zea mays (Maize) protein is CASP-like protein 1C2.